A 117-amino-acid chain; its full sequence is DNA-directed RNA polymerase subunit omega (117 aa).

Residues Lys-96–Gln-105 are compositionally biased toward basic and acidic residues. The interval Lys-96–Glu-117 is disordered. Positions Ser-108–Glu-117 are enriched in low complexity.

Belongs to the RNA polymerase subunit omega family. The RNAP catalytic core consists of 2 alpha, 1 beta, 1 beta' and 1 omega subunit. When a sigma factor is associated with the core the holoenzyme is formed, which can initiate transcription.

The enzyme catalyses RNA(n) + a ribonucleoside 5'-triphosphate = RNA(n+1) + diphosphate. In terms of biological role, promotes RNA polymerase assembly. Latches the N- and C-terminal regions of the beta' subunit thereby facilitating its interaction with the beta and alpha subunits. The sequence is that of DNA-directed RNA polymerase subunit omega (rpoZ) from Lactococcus lactis subsp. lactis (strain IL1403) (Streptococcus lactis).